The following is a 70-amino-acid chain: Conotoxin AbVIB (70 aa).

Residues 1-17 form the signal peptide; that stretch reads VIIIAVLFLTACQLTTA. The propeptide occupies 18-41; sequence ETSSRGKQKHRALRSTDKNSKLTR. The interval 20-41 is disordered; the sequence is SSRGKQKHRALRSTDKNSKLTR. 3 disulfides stabilise this stretch: cysteine 43–cysteine 57, cysteine 50–cysteine 61, and cysteine 56–cysteine 68.

Belongs to the conotoxin O1 superfamily. Expressed by the venom duct.

It localises to the secreted. The sequence is that of Conotoxin AbVIB from Conus abbreviatus (Abbreviated cone).